Reading from the N-terminus, the 305-residue chain is tRNA pseudouridine synthase B (305 aa).

Residue aspartate 48 is the Nucleophile of the active site.

This sequence belongs to the pseudouridine synthase TruB family. Type 1 subfamily.

The enzyme catalyses uridine(55) in tRNA = pseudouridine(55) in tRNA. In terms of biological role, responsible for synthesis of pseudouridine from uracil-55 in the psi GC loop of transfer RNAs. The chain is tRNA pseudouridine synthase B from Mannheimia succiniciproducens (strain KCTC 0769BP / MBEL55E).